Here is a 1099-residue protein sequence, read N- to C-terminus: Carbamoyl phosphate synthase large chain (1099 aa).

Residues 1–402 form a carboxyphosphate synthetic domain region; sequence MPKREDIKRI…ALGKALRSLE (402 aa). The ATP site is built by R129, R169, G175, G176, E208, V210, E215, G241, I242, H243, Q285, and E299. Positions 133-328 constitute an ATP-grasp 1 domain; that stretch reads KETMEKAGLE…IAKVAALLAV (196 aa). The Mg(2+) site is built by Q285, E299, and N301. Positions 285, 299, and 301 each coordinate Mn(2+). The oligomerization domain stretch occupies residues 403-541; sequence LDAAPKLDLE…STYNGVENEA (139 aa). The tract at residues 542–944 is carbamoyl phosphate synthetic domain; it reads VPSDREKIMI…AFAKAQIAAG (403 aa). Positions 666–857 constitute an ATP-grasp 2 domain; that stretch reads AKLLKQIGLK…VARIAAKIMV (192 aa). The ATP site is built by R702, K741, L743, E748, G773, V774, H775, S776, Q816, and E828. Mg(2+) is bound by residues Q816, E828, and N830. Q816, E828, and N830 together coordinate Mn(2+). In terms of domain architecture, MGS-like spans 945-1099; it reads NPLPTTGAIL…VRRLTDTWKM (155 aa). The segment at 945–1099 is allosteric domain; that stretch reads NPLPTTGAIL…VRRLTDTWKM (155 aa).

The protein belongs to the CarB family. In terms of assembly, composed of two chains; the small (or glutamine) chain promotes the hydrolysis of glutamine to ammonia, which is used by the large (or ammonia) chain to synthesize carbamoyl phosphate. Tetramer of heterodimers (alpha,beta)4. Requires Mg(2+) as cofactor. Mn(2+) serves as cofactor.

The enzyme catalyses hydrogencarbonate + L-glutamine + 2 ATP + H2O = carbamoyl phosphate + L-glutamate + 2 ADP + phosphate + 2 H(+). It carries out the reaction hydrogencarbonate + NH4(+) + 2 ATP = carbamoyl phosphate + 2 ADP + phosphate + 2 H(+). The protein operates within amino-acid biosynthesis; L-arginine biosynthesis; carbamoyl phosphate from bicarbonate: step 1/1. It participates in pyrimidine metabolism; UMP biosynthesis via de novo pathway; (S)-dihydroorotate from bicarbonate: step 1/3. Large subunit of the glutamine-dependent carbamoyl phosphate synthetase (CPSase). CPSase catalyzes the formation of carbamoyl phosphate from the ammonia moiety of glutamine, carbonate, and phosphate donated by ATP, constituting the first step of 2 biosynthetic pathways, one leading to arginine and/or urea and the other to pyrimidine nucleotides. The large subunit (synthetase) binds the substrates ammonia (free or transferred from glutamine from the small subunit), hydrogencarbonate and ATP and carries out an ATP-coupled ligase reaction, activating hydrogencarbonate by forming carboxy phosphate which reacts with ammonia to form carbamoyl phosphate. In Thermotoga sp. (strain RQ2), this protein is Carbamoyl phosphate synthase large chain.